Reading from the N-terminus, the 403-residue chain is Acetylornithine aminotransferase (403 aa).

Pyridoxal 5'-phosphate-binding positions include 101-102 (GA) and Phe134. Position 137 (Arg137) interacts with N(2)-acetyl-L-ornithine. 219–222 (DEVQ) is a pyridoxal 5'-phosphate binding site. Lys248 is subject to N6-(pyridoxal phosphate)lysine. Thr276 serves as a coordination point for N(2)-acetyl-L-ornithine. Residue Thr277 coordinates pyridoxal 5'-phosphate.

It belongs to the class-III pyridoxal-phosphate-dependent aminotransferase family. ArgD subfamily. As to quaternary structure, homodimer. Pyridoxal 5'-phosphate serves as cofactor.

The protein resides in the cytoplasm. The enzyme catalyses N(2)-acetyl-L-ornithine + 2-oxoglutarate = N-acetyl-L-glutamate 5-semialdehyde + L-glutamate. Its pathway is amino-acid biosynthesis; L-arginine biosynthesis; N(2)-acetyl-L-ornithine from L-glutamate: step 4/4. The protein is Acetylornithine aminotransferase of Brucella melitensis biotype 1 (strain ATCC 23456 / CCUG 17765 / NCTC 10094 / 16M).